The chain runs to 447 residues: Methyl-coenzyme M reductase II subunit beta (447 aa).

Y368 provides a ligand contact to coenzyme M. G370 is a binding site for coenzyme B.

The protein belongs to the methyl-coenzyme M reductase beta subunit family. MCR is a hexamer of two alpha, two beta, and two gamma chains, forming a dimer of heterotrimers. Coenzyme F430 serves as cofactor.

It catalyses the reaction coenzyme B + methyl-coenzyme M = methane + coenzyme M-coenzyme B heterodisulfide. It functions in the pathway one-carbon metabolism; methyl-coenzyme M reduction; methane from methyl-coenzyme M: step 1/1. Component of the methyl-coenzyme M reductase (MCR) I that catalyzes the reductive cleavage of methyl-coenzyme M (CoM-S-CH3 or 2-(methylthio)ethanesulfonate) using coenzyme B (CoB or 7-mercaptoheptanoylthreonine phosphate) as reductant which results in the production of methane and the mixed heterodisulfide of CoB and CoM (CoM-S-S-CoB). This is the final step in methanogenesis. The polypeptide is Methyl-coenzyme M reductase II subunit beta (mrtB) (Methanocaldococcus jannaschii (strain ATCC 43067 / DSM 2661 / JAL-1 / JCM 10045 / NBRC 100440) (Methanococcus jannaschii)).